Here is a 269-residue protein sequence, read N- to C-terminus: Troponin I (269 aa).

The disordered stretch occupies residues Met1–Arg104. Ala2 is modified (N-acetylalanine). Residues Ala9–Pro50 show a composition bias toward low complexity. Positions Asp56–Lys91 are enriched in basic and acidic residues. Positions Glu162–Lys171 are troponin T-interaction. The interval Asn189–Pro202 is actin-binding. N6,N6,N6-trimethyllysine is present on residues Lys201 and Lys205. The interval Thr239 to Ala269 is disordered.

Belongs to the troponin I family. In terms of assembly, binds to actin and tropomyosin. In terms of tissue distribution, all isoforms are expressed in somatic muscle. Isoforms containing exon 6a1 (isoforms 1 and 2) are expressed in all muscles but highest expression is in abdominal muscle and splanchnic muscle of the gut. Isoforms containing exon 6b1 (isoforms 5, 6, 9 and 10) are highly expressed in the tergal depressor of trochanter (TDT) muscle.

Its function is as follows. Troponin I is the ATPase inhibitory subunit of troponin in the thin filament regulatory complex. Involved in the development and maintenance of muscle and nervous system. May also be involved in the cytoskeletal apparatus. The chain is Troponin I (wupA) from Drosophila melanogaster (Fruit fly).